The sequence spans 102 residues: Nucleoid-associated protein WS1681 (102 aa).

The protein belongs to the YbaB/EbfC family. In terms of assembly, homodimer.

Its subcellular location is the cytoplasm. The protein resides in the nucleoid. In terms of biological role, binds to DNA and alters its conformation. May be involved in regulation of gene expression, nucleoid organization and DNA protection. In Wolinella succinogenes (strain ATCC 29543 / DSM 1740 / CCUG 13145 / JCM 31913 / LMG 7466 / NCTC 11488 / FDC 602W) (Vibrio succinogenes), this protein is Nucleoid-associated protein WS1681.